Here is a 225-residue protein sequence, read N- to C-terminus: MAENDAKPTLPKKSGPYISSVTSHGMNLVIRGIVLFFIGVFLALVLNLLQIQRNVTLFPPDVITSIFSSAWWVPPCCGTASAVIGLLYPCMDRHLGEPHKFKREWSSVMRCVAVFVGINHASAKVDFANNIQLSLTLAALSIGLWWTFDRSRSGFGLGVGIAFLATLVSQLLVYNGVYQYTSPDFLYVRSWLPCIFFAGGITMGNIGRQLAMYECKVIAEKSHED.

The Cytoplasmic portion of the chain corresponds to methionine 1 to leucine 28. The chain crosses the membrane as a helical span at residues valine 29–isoleucine 51. The Lumenal segment spans residues glutamine 52 to alanine 70. The chain crosses the membrane as a helical span at residues tryptophan 71–tyrosine 88. Over proline 89–arginine 103 the chain is Cytoplasmic. A helical transmembrane segment spans residues glutamate 104–aspartate 126. Topologically, residues phenylalanine 127 to asparagine 129 are lumenal. Residues asparagine 130–phenylalanine 148 traverse the membrane as a helical segment. Residues aspartate 149–serine 153 lie on the Cytoplasmic side of the membrane. The chain crosses the membrane as a helical span at residues glycine 154 to asparagine 175. Residues glycine 176–arginine 189 are Lumenal-facing. The chain crosses the membrane as a helical span at residues serine 190–glycine 207. The Cytoplasmic portion of the chain corresponds to arginine 208–aspartate 225. The short motif at alanine 219 to aspartate 225 is the KxHxx element.

This sequence belongs to the INSIG family. In terms of assembly, interacts with SCAP; interaction is direct and only takes place in the presence of sterols; it prevents interaction between SCAP and the coat protein complex II (COPII). Associates with the SCAP-SREBP complex; association is mediated via its interaction with SCAP and only takes place in the presence of sterols.

The protein resides in the endoplasmic reticulum membrane. Functionally, oxysterol-binding protein that mediates feedback control of cholesterol synthesis by controlling both endoplasmic reticulum to Golgi transport of SCAP and degradation of HMGCR. Acts as a negative regulator of cholesterol biosynthesis by mediating the retention of the SCAP-SREBP complex in the endoplasmic reticulum, thereby blocking the processing of sterol regulatory element-binding proteins (SREBPs). Binds oxysterol, including 22-hydroxycholesterol, 24-hydroxycholesterol, 25-hydroxycholesterol and 27-hydroxycholesterol, regulating interaction with SCAP and retention of the SCAP-SREBP complex in the endoplasmic reticulum. In presence of oxysterol, interacts with SCAP, retaining the SCAP-SREBP complex in the endoplasmic reticulum, thereby preventing SCAP from escorting SREBPs to the Golgi. Sterol deprivation reduces oxysterol-binding, disrupting the interaction between INSIG2 and SCAP, thereby promoting Golgi transport of the SCAP-SREBP complex, followed by processing and nuclear translocation of SREBPs. Also regulates cholesterol synthesis by regulating degradation of HMGCR. The sequence is that of Insulin-induced gene 2 protein from Gallus gallus (Chicken).